A 439-amino-acid chain; its full sequence is Ornithine aminotransferase, mitochondrial (439 aa).

The N-terminal 25 residues, 1–25 (MLSKLASLQTIAALRRGVHTSVASA), are a transit peptide targeting the mitochondrion. Residues lysine 49 and lysine 66 each carry the N6-acetyllysine modification. An N6-succinyllysine modification is found at lysine 102. Lysine 107 carries the post-translational modification N6-acetyllysine; alternate. Lysine 107 is modified (N6-succinyllysine; alternate). Lysine 292 carries the N6-(pyridoxal phosphate)lysine modification. At lysine 362 the chain carries N6-acetyllysine; alternate. Position 362 is an N6-succinyllysine; alternate (lysine 362). 2 positions are modified to N6-acetyllysine: lysine 386 and lysine 392. N6-acetyllysine; alternate is present on lysine 405. The residue at position 405 (lysine 405) is an N6-succinyllysine; alternate. At lysine 421 the chain carries N6-acetyllysine.

It belongs to the class-III pyridoxal-phosphate-dependent aminotransferase family. As to quaternary structure, homohexamer. It depends on pyridoxal 5'-phosphate as a cofactor.

The protein localises to the mitochondrion matrix. It catalyses the reaction L-ornithine + 2-oxoglutarate = L-glutamate 5-semialdehyde + L-glutamate. Its pathway is amino-acid biosynthesis; L-proline biosynthesis; L-glutamate 5-semialdehyde from L-ornithine: step 1/1. In terms of biological role, catalyzes the reversible interconversion of L-ornithine and 2-oxoglutarate to L-glutamate semialdehyde and L-glutamate. This is Ornithine aminotransferase, mitochondrial (Oat) from Mus musculus (Mouse).